The chain runs to 423 residues: Histidine--tRNA ligase (423 aa).

Belongs to the class-II aminoacyl-tRNA synthetase family. As to quaternary structure, homodimer.

Its subcellular location is the cytoplasm. The catalysed reaction is tRNA(His) + L-histidine + ATP = L-histidyl-tRNA(His) + AMP + diphosphate + H(+). The protein is Histidine--tRNA ligase of Phytoplasma mali (strain AT).